Reading from the N-terminus, the 57-residue chain is UPF0391 membrane protein Patl_0263 (57 aa).

2 consecutive transmembrane segments (helical) span residues 8-28 (FFVL…GVAA) and 30-50 (IAKV…VLAF).

Belongs to the UPF0391 family.

The protein resides in the cell membrane. This is UPF0391 membrane protein Patl_0263 from Pseudoalteromonas atlantica (strain T6c / ATCC BAA-1087).